The following is a 39-amino-acid chain: Cytochrome b6-f complex subunit 5 (39 aa).

A helical transmembrane segment spans residues 5–25 (LLCGIVLGLVPITLLGLFVSA).

The protein belongs to the PetG family. In terms of assembly, the 4 large subunits of the cytochrome b6-f complex are cytochrome b6, subunit IV (17 kDa polypeptide, PetD), cytochrome f and the Rieske protein, while the 4 small subunits are PetG, PetL, PetM and PetN. The complex functions as a dimer.

Its subcellular location is the cellular thylakoid membrane. Functionally, component of the cytochrome b6-f complex, which mediates electron transfer between photosystem II (PSII) and photosystem I (PSI), cyclic electron flow around PSI, and state transitions. PetG is required for either the stability or assembly of the cytochrome b6-f complex. In Prochlorococcus marinus subsp. pastoris (strain CCMP1986 / NIES-2087 / MED4), this protein is Cytochrome b6-f complex subunit 5.